The chain runs to 190 residues: RNA-binding protein OPG065 (190 aa).

Positions 5-70 constitute a Z-binding domain; it reads YIDERSDAEI…DIPPRWFMTT (66 aa). Positions 117 to 184 constitute a DRBM domain; sequence NPVTIINEYC…AKLAVDKLLG (68 aa).

This sequence belongs to the orthopoxvirus OPG065 family. In terms of assembly, interacts with host G1P2/ISG15. Interacts with host EIF2AK2/PKR. Interacts with host ZBP1.

Its function is as follows. RNA-binding protein that plays a role in the inhibition of multiple cellular antiviral responses activated by double-stranded RNA (dsRNA), such as inhibition of PKR activation, necroptosis, and IFN-mediated antiviral activities. Recognizes and binds Z-RNA structures via its Z-binding domain and dsRNA via its DRBM domain: RNA-binding activity is required to escape host ZBP1-dependent necroptosis. Mechanistically, the Z-binding domain binds Z-RNAs that are produced during vaccinia virus infection, thereby competing with Z-RNA detection by host ZBP1, suppressing ZBP1-dependent necroptosis. Acts as a key inhibitor of the interferon response by blocking the phosphorylation and subsequent activation of IRF3 and IRF7 kinases that are required for interferon-alpha gene expression. Inhibits NF-kappa-B activation and the ubiquitin-like protein ISG15, which is an early antiviral protein. The binding with host ISG15 subsequently blocks host ISGylation. The polypeptide is RNA-binding protein OPG065 (OPG065) (Homo sapiens (Human)).